Here is a 79-residue protein sequence, read N- to C-terminus: Large ribosomal subunit protein uL24 (79 aa).

Belongs to the universal ribosomal protein uL24 family. Part of the 50S ribosomal subunit.

Functionally, one of two assembly initiator proteins, it binds directly to the 5'-end of the 23S rRNA, where it nucleates assembly of the 50S subunit. Its function is as follows. One of the proteins that surrounds the polypeptide exit tunnel on the outside of the subunit. This Lactobacillus delbrueckii subsp. bulgaricus (strain ATCC 11842 / DSM 20081 / BCRC 10696 / JCM 1002 / NBRC 13953 / NCIMB 11778 / NCTC 12712 / WDCM 00102 / Lb 14) protein is Large ribosomal subunit protein uL24.